The primary structure comprises 151 residues: Deoxyuridine 5'-triphosphate nucleotidohydrolase (151 aa).

Residues 70–72 (RSG), Asn-83, 87–89 (LID), and Met-97 each bind substrate.

Belongs to the dUTPase family. In terms of assembly, homotrimer. It depends on Mg(2+) as a cofactor.

The enzyme catalyses dUTP + H2O = dUMP + diphosphate + H(+). The protein operates within pyrimidine metabolism; dUMP biosynthesis; dUMP from dCTP (dUTP route): step 2/2. In terms of biological role, this enzyme is involved in nucleotide metabolism: it produces dUMP, the immediate precursor of thymidine nucleotides and it decreases the intracellular concentration of dUTP so that uracil cannot be incorporated into DNA. The sequence is that of Deoxyuridine 5'-triphosphate nucleotidohydrolase from Escherichia coli O45:K1 (strain S88 / ExPEC).